The sequence spans 559 residues: Potassium-transporting ATPase potassium-binding subunit (559 aa).

13 consecutive transmembrane segments (helical) span residues glycine 5–serine 25, leucine 27–tryptophan 47, leucine 63–tryptophan 83, glycine 132–isoleucine 152, leucine 170–isoleucine 190, leucine 253–alanine 273, leucine 283–valine 303, phenylalanine 327–valine 347, alanine 356–valine 376, glycine 379–glycine 399, methionine 416–methionine 436, leucine 484–alanine 504, and glycine 524–isoleucine 544.

Belongs to the KdpA family. The system is composed of three essential subunits: KdpA, KdpB and KdpC.

The protein localises to the cell inner membrane. Functionally, part of the high-affinity ATP-driven potassium transport (or Kdp) system, which catalyzes the hydrolysis of ATP coupled with the electrogenic transport of potassium into the cytoplasm. This subunit binds the periplasmic potassium ions and delivers the ions to the membrane domain of KdpB through an intramembrane tunnel. The polypeptide is Potassium-transporting ATPase potassium-binding subunit (Salmonella choleraesuis (strain SC-B67)).